A 3930-amino-acid chain; its full sequence is Hybrid PKS-NRPS synthetase apdA (3930 aa).

Residues 2–440 form the Ketosynthase family 3 (KS3) domain; sequence QDLIAIVGSA…GTNAHAIIEG (439 aa). Active-site for beta-ketoacyl synthase activity residues include Cys-176, His-313, and His-361. The interval 557 to 879 is malonyl-CoA:ACP transacylase (MAT) domain; the sequence is IFTGQGAQWA…MRRGDNEIEA (323 aa). Positions 948-1085 are N-terminal hotdog fold; the sequence is HELLGRRVPD…GRLIINYGDP (138 aa). The tract at residues 948-1251 is dehydratase (DH) domain; sequence HELLGRRVPD…SMKSMSEPQP (304 aa). The 305-residue stretch at 948–1252 folds into the PKS/mFAS DH domain; it reads HELLGRRVPD…MKSMSEPQPE (305 aa). The Proton acceptor; for dehydratase activity role is filled by His-980. A C-terminal hotdog fold region spans residues 1100–1252; sequence NVPVDMGRFY…MKSMSEPQPE (153 aa). Asp-1159 (proton donor; for dehydratase activity) is an active-site residue. Residues 1389–1588 form a methyltransferase (MT) domain region; that stretch reads QDDMLNRFYM…FSGLDCLAPD (200 aa). The tract at residues 2088-2229 is ketoreductase (KR) domain; the sequence is ATYLLAGMTG…SLASIIGNAA (142 aa). The Carrier 1 domain occupies 2326–2403; the sequence is AVIPIVQEAF…QICEDAVRQF (78 aa). Ser-2363 is modified (O-(pantetheine 4'-phosphoryl)serine). 2 disordered regions span residues 2414-2433 and 2444-2494; these read VAPN…SNAT and DAAN…VDAD. The span at 2445–2473 shows a compositional bias: low complexity; sequence AANGDYESSSQGDDSRGNSSSSSSHTSPS. The condensation (C) domain stretch occupies residues 2509 to 2937; that stretch reads PASFAQSRLW…SLPVNQLPVT (429 aa). Residues 2971 to 3371 form an adenylation (A) (KR) domain region; the sequence is KSFPEETAIK…GTLIFMGRMD (401 aa). The reductase (RED) domain stretch occupies residues 2971–3371; it reads KSFPEETAIK…GTLIFMGRMD (401 aa). One can recognise a Carrier 2 domain in the interval 3493-3572; sequence RHLSLAEGEL…QMARRISRRK (80 aa). Ser-3532 carries the O-(pantetheine 4'-phosphoryl)serine modification.

It in the C-terminal section; belongs to the NRP synthetase family.

It participates in secondary metabolite biosynthesis. In terms of biological role, hybrid PKS-NRPS synthetase; part of the gene cluster that mediates the biosynthesis of aspyridones. The polyketide-amino acid backbone preaspyridone A is first assembled by the PKS-NRPS hybrid apdA. The assembly of preaspyridone A is initiated by loading of malonyl-CoA onto apdA, followed by decarboxylation to yield the acetyl starter unit. The growing polyketide chain then elongates into a tetraketide. The adpA PKS module catalyzes three Claisen condensations, as well as beta-keto processing and methylation. Alpha-methylation step during polyketide synthesis is a prerequisite and a key checkpoint for chain transfer between PKS and NRPS modules. The downstream NRPS module contains the condensation (C), adenylation (A), and thiolation (T) domains and catalyzes the incorporation of tyrosine via the formation of the L-tyrosinyl-thioester and the amide linkage between L-tyrosinyl-thioester and the tetraketide. The bimodular assembly line is terminated with a reductase (R) domain that facilitates formation and release of the tetramic acid product. Because apdA lacks a designated enoylreductase (ER) domain, the required activity is provided the enoyl reductase apdC. ApdC appears to operate with different stereoselectivity in different PKS cycle. Combined with apdC, apdA is proposed to synthesize preaspyridone A via about 20 enzymatic steps. A number of oxidative steps performed successively by the cytochrome P450 monooxygenases apdE and apdB are required for the conversion of preaspyridone A to aspyridone A. The cytochrome P450 monooxygenase apdE is responsible for the oxidative dephenylation of preaspyridone A. Finally, the predicted FAD-dependent monooxygenase apdD and the acyl-CoA dehydrogenase apdG may be involved in the transformation of aspyridone A into aspyridone B. The chain is Hybrid PKS-NRPS synthetase apdA from Emericella nidulans (strain FGSC A4 / ATCC 38163 / CBS 112.46 / NRRL 194 / M139) (Aspergillus nidulans).